The following is a 121-amino-acid chain: Small ribosomal subunit protein bS16 (121 aa).

Residues 88–121 (GKAKLEKEKKAKAKTKEEENEGSKTESGSNEAES) are disordered. Basic and acidic residues predominate over residues 90 to 111 (AKLEKEKKAKAKTKEEENEGSK). Residues 112–121 (TESGSNEAES) are compositionally biased toward polar residues.

This sequence belongs to the bacterial ribosomal protein bS16 family.

This is Small ribosomal subunit protein bS16 from Prochlorococcus marinus (strain MIT 9215).